The following is a 458-amino-acid chain: NADH-quinone oxidoreductase subunit N (458 aa).

The next 14 helical transmembrane spans lie at 2–22, 30–50, 71–91, 93–113, 118–138, 153–173, 196–216, 235–255, 261–281, 290–310, 319–339, 361–381, 397–417, and 438–458; these read LLLLPEITLTLIALLGQCFAL, IIYNIVILLCIISIFLTFKYS, IILLFTIVSLIIYRDYSILVG, TLKFEFITLMLLSIVGIFVAI, FLLLFCGMELTALTSYALAGF, FILGSLVSCLSLFGISFIYGF, LIIGIVLFLSSIFFKLASSPL, FTAASKIGMVIVLLNISKLII, INYNLIKIIAILSMLFGAFGA, LMAYSTILNIGYVLIGVLLHN, LYILIYAVVSIGFFTCLIMLF, IAALISIVMFSMIGIPPLTGF, FTLAYCGIFTSVVAAFYYLKV, and LLLINYLVLGFLLFGSFIILF.

This sequence belongs to the complex I subunit 2 family. In terms of assembly, NDH-1 is composed of 14 different subunits. Subunits NuoA, H, J, K, L, M, N constitute the membrane sector of the complex.

It localises to the cell inner membrane. The enzyme catalyses a quinone + NADH + 5 H(+)(in) = a quinol + NAD(+) + 4 H(+)(out). NDH-1 shuttles electrons from NADH, via FMN and iron-sulfur (Fe-S) centers, to quinones in the respiratory chain. The immediate electron acceptor for the enzyme in this species is believed to be ubiquinone. Couples the redox reaction to proton translocation (for every two electrons transferred, four hydrogen ions are translocated across the cytoplasmic membrane), and thus conserves the redox energy in a proton gradient. The protein is NADH-quinone oxidoreductase subunit N of Rickettsia prowazekii (strain Madrid E).